The chain runs to 224 residues: PKHD-type hydroxylase Shewmr4_3244 (224 aa).

Residues 78 to 176 (QFYPPLFNRY…RTAAFMWLQS (99 aa)) form the Fe2OG dioxygenase domain. Fe cation-binding residues include H96, D98, and H157. R167 is a 2-oxoglutarate binding site.

It depends on Fe(2+) as a cofactor. The cofactor is L-ascorbate.

In Shewanella sp. (strain MR-4), this protein is PKHD-type hydroxylase Shewmr4_3244.